The following is a 307-amino-acid chain: Olfactory receptor 8K5 (307 aa).

Residues 1-25 (MGQHNLTVLTEFILMELTRRPELQI) lie on the Extracellular side of the membrane. Asn-5 carries N-linked (GlcNAc...) asparagine glycosylation. Residues 26–46 (PLFGVFLVIYLITVVGNLTMI) form a helical membrane-spanning segment. At 47–54 (ILTKLDSH) the chain is on the cytoplasmic side. Residues 55–75 (LHTPMYFSIRHLAFVDLGNST) form a helical membrane-spanning segment. Residues 76–99 (VICPKVLANFVVDRNTISYYACAA) are Extracellular-facing. A disulfide bridge connects residues Cys-97 and Cys-189. Residues 100 to 120 (QLAFFLMFIISEFFILSAMAY) traverse the membrane as a helical segment. The Cytoplasmic portion of the chain corresponds to 121–139 (DRYVAICNPLLYYVIMSQR). Residues 140–160 (LCHVLVGIQYLYSTFQALMFT) form a helical membrane-spanning segment. Topologically, residues 161–197 (IKIFTLTFCGSNVISHFYCDDVPLLPMLCSNAQEIEL) are extracellular. Residues 198–217 (LSILFSVFNLISSFLIVLVS) traverse the membrane as a helical segment. The Cytoplasmic segment spans residues 218–237 (YMLILLAICQMHSAEGRKKA). The helical transmembrane segment at 238–258 (FSTCGSHLTVVVVFYGSLLFM) threads the bilayer. Residues 259 to 271 (YMQPNSTHFFDTD) are Extracellular-facing. Asn-263 is a glycosylation site (N-linked (GlcNAc...) asparagine). The helical transmembrane segment at 272-292 (KMASVFYTLVIPMLNPLIYSL) threads the bilayer. The Cytoplasmic segment spans residues 293–307 (RNEEVKNAFYKLFEN).

The protein belongs to the G-protein coupled receptor 1 family.

It localises to the cell membrane. Odorant receptor. This chain is Olfactory receptor 8K5 (OR8K5), found in Homo sapiens (Human).